The following is a 200-amino-acid chain: Large ribosomal subunit protein uL4 (200 aa).

Residues 38–68 form a disordered region; that stretch reads GRQGSKQQKTRSDVRGGGKRPWRQKGTGRAR. The span at 54 to 65 shows a compositional bias: basic residues; it reads GGKRPWRQKGTG.

The protein belongs to the universal ribosomal protein uL4 family. In terms of assembly, part of the 50S ribosomal subunit.

Its function is as follows. One of the primary rRNA binding proteins, this protein initially binds near the 5'-end of the 23S rRNA. It is important during the early stages of 50S assembly. It makes multiple contacts with different domains of the 23S rRNA in the assembled 50S subunit and ribosome. Functionally, forms part of the polypeptide exit tunnel. The sequence is that of Large ribosomal subunit protein uL4 from Pseudomonas fluorescens (strain Pf0-1).